Reading from the N-terminus, the 275-residue chain is Nitrogenase iron protein 3 (275 aa).

9 to 16 (GKGGIGKS) provides a ligand contact to ATP. A [4Fe-4S] cluster-binding site is contributed by Cys-97. Residue Arg-100 is modified to ADP-ribosylarginine; by dinitrogenase reductase ADP-ribosyltransferase. Cys-132 lines the [4Fe-4S] cluster pocket.

The protein belongs to the NifH/BchL/ChlL family. As to quaternary structure, homodimer. The cofactor is [4Fe-4S] cluster. Post-translationally, the reversible ADP-ribosylation of Arg-100 inactivates the nitrogenase reductase and regulates nitrogenase activity.

It carries out the reaction N2 + 8 reduced [2Fe-2S]-[ferredoxin] + 16 ATP + 16 H2O = H2 + 8 oxidized [2Fe-2S]-[ferredoxin] + 2 NH4(+) + 16 ADP + 16 phosphate + 6 H(+). In terms of biological role, the key enzymatic reactions in nitrogen fixation are catalyzed by the nitrogenase complex, which has 2 components: the iron protein and the molybdenum-iron protein. The sequence is that of Nitrogenase iron protein 3 (nifH3) from Clostridium pasteurianum.